Reading from the N-terminus, the 543-residue chain is CTP synthase (543 aa).

The amidoligase domain stretch occupies residues 1–265; the sequence is MTRYIFVTGG…DDFVVERFGL (265 aa). Residue S13 coordinates CTP. S13 is a UTP binding site. ATP-binding positions include 14–19 and D71; that span reads SLGKGI. D71 and E139 together coordinate Mg(2+). Residues 146–148, 186–191, and K222 each bind CTP; these read DIE and KTKPTQ. Residues 186–191 and K222 contribute to the UTP site; that span reads KTKPTQ. The 252-residue stretch at 290-541 folds into the Glutamine amidotransferase type-1 domain; it reads TIAMVGKYME…VKAALAQHQK (252 aa). G351 lines the L-glutamine pocket. C378 (nucleophile; for glutamine hydrolysis) is an active-site residue. L-glutamine contacts are provided by residues 379–382, E402, and R469; that span reads LGMQ. Catalysis depends on residues H514 and E516.

The protein belongs to the CTP synthase family. As to quaternary structure, homotetramer.

It catalyses the reaction UTP + L-glutamine + ATP + H2O = CTP + L-glutamate + ADP + phosphate + 2 H(+). The enzyme catalyses L-glutamine + H2O = L-glutamate + NH4(+). The catalysed reaction is UTP + NH4(+) + ATP = CTP + ADP + phosphate + 2 H(+). It participates in pyrimidine metabolism; CTP biosynthesis via de novo pathway; CTP from UDP: step 2/2. Allosterically activated by GTP, when glutamine is the substrate; GTP has no effect on the reaction when ammonia is the substrate. The allosteric effector GTP functions by stabilizing the protein conformation that binds the tetrahedral intermediate(s) formed during glutamine hydrolysis. Inhibited by the product CTP, via allosteric rather than competitive inhibition. In terms of biological role, catalyzes the ATP-dependent amination of UTP to CTP with either L-glutamine or ammonia as the source of nitrogen. Regulates intracellular CTP levels through interactions with the four ribonucleotide triphosphates. This chain is CTP synthase, found in Pseudomonas fluorescens (strain Pf0-1).